The following is a 560-amino-acid chain: Putative transport protein VFMJ11_0927 (560 aa).

The next 5 membrane-spanning stretches (helical) occupy residues 8–28 (LLSQ…LFIA), 37–57 (LGSS…GYTF), 66–86 (FMLF…GIFL), 94–114 (LLVL…GHYF), and 161–181 (NLSV…ILLA). 2 RCK C-terminal domains span residues 203–292 (RGIG…FRNG) and 293–376 (KEVF…KIGF). A run of 5 helical transmembrane segments spans residues 386 to 406 (LLAF…TMSF), 409 to 429 (VTFG…LGFL), 451 to 471 (GLLV…NEYF), 478 to 498 (VLAA…LVGA), and 539 to 559 (AGTY…MILL).

It belongs to the AAE transporter (TC 2.A.81) family. YbjL subfamily.

It is found in the cell membrane. In Aliivibrio fischeri (strain MJ11) (Vibrio fischeri), this protein is Putative transport protein VFMJ11_0927.